The sequence spans 1488 residues: Chromosome partition protein MukB (1488 aa).

Residue 34-41 (GGNGAGKS) coordinates ATP. Coiled-coil stretches lie at residues 326–418 (LEAD…QYNQ), 444–472 (LDTF…QTAH), and 509–602 (RHLA…QRAP). The interval 666–783 (PGGAEDQRLN…SLPIFGRAAR (118 aa)) is flexible hinge. Coiled-coil stretches lie at residues 835–923 (EAEI…AKLE), 977–1116 (EMLS…AKAG), and 1209–1265 (VEAI…LQSV). Residues 1049–1074 (ADSGAEERARQRRDELHAQLSNNRSR) are disordered. Residues 1051–1065 (SGAEERARQRRDELH) show a composition bias toward basic and acidic residues.

Belongs to the SMC family. MukB subfamily. Homodimerization via its hinge domain. Binds to DNA via its C-terminal region. Interacts, and probably forms a ternary complex, with MukE and MukF via its C-terminal region. The complex formation is stimulated by calcium or magnesium. Interacts with tubulin-related protein FtsZ.

The protein localises to the cytoplasm. Its subcellular location is the nucleoid. In terms of biological role, plays a central role in chromosome condensation, segregation and cell cycle progression. Functions as a homodimer, which is essential for chromosome partition. Involved in negative DNA supercoiling in vivo, and by this means organize and compact chromosomes. May achieve or facilitate chromosome segregation by condensation DNA from both sides of a centrally located replisome during cell division. The protein is Chromosome partition protein MukB of Salmonella enteritidis PT4 (strain P125109).